Consider the following 940-residue polypeptide: UvrABC system protein A (940 aa).

Residue 33-40 (GVSGSGKS) coordinates ATP. The segment at 252–279 (CPVCGFTVPELEPRLFSFNAPFGSCPDC) adopts a C4-type zinc-finger fold. ABC transporter domains are found at residues 309–586 (WYGK…KKSL) and 606–935 (IDKK…QYLK). 639–646 (GVSGSGKS) serves as a coordination point for ATP. Residues 738–764 (CEACSGDGIIKIEMHFLPDVYVPCEVC) form a C4-type zinc finger.

This sequence belongs to the ABC transporter superfamily. UvrA family. As to quaternary structure, forms a heterotetramer with UvrB during the search for lesions.

It localises to the cytoplasm. The UvrABC repair system catalyzes the recognition and processing of DNA lesions. UvrA is an ATPase and a DNA-binding protein. A damage recognition complex composed of 2 UvrA and 2 UvrB subunits scans DNA for abnormalities. When the presence of a lesion has been verified by UvrB, the UvrA molecules dissociate. This chain is UvrABC system protein A, found in Lactococcus lactis subsp. lactis (strain IL1403) (Streptococcus lactis).